Consider the following 671-residue polypeptide: MAAAGVVSGKIIYEQEGVYIHSSCGKANDQDSLISGILRVLEKDAEVIVDWRPLDDALDSSSILCAGKDSSSVVEWTQAPKERAHRGSDQQSSYEAEWDMVTTVSFKKKPHTNGDAPGHRNGKSKWSFLFSLADLKSVKQSKEGMGWSYLVFCLKDDVMLPALHFHQGDSKLLIESLEKYVVLCESPQDSRTLLVNCQNKSLSQSFENLLDEPAYGLIQKIKKDPYTATMVGFSKVTNYIFDSLRGSDPSTHQRPPSEMADFLSDAIPGLKINQQEEPGFEVITRIDLGERPVVQRREPVSLEEWNKSLDPEGRLVAVESMKQKIFRGGLSHSLRKQAWKFLLGYFPWDSTKEERTQLQKQKTDEYFRMKLQWKSVSEAQEKRNSRLRDYRSLIEKDVNRTDRTNKFYEGQDNPGLILLHDILMTYCMYDFDLGYVQGMSDLLSPLLYVMENEVDAFWCFASYMDQMHQNFEEQMQGMKTQLIQLSTLLRLLDSGFCSYLESQDSGYLYFCFRWLLIRFKREFSFLDILRLWEVMWTELPCKNFHLLLCCAILESEKQQIMAKHYGFNEILKHINELSMKIDVEDILCKAEAISLQMAQCKELPQAVCEILGLQDSEITTPDSDTDENVGSPCPVSAFPSSTLPILAASEAKDDSPTQTLASPNACRLTPA.

At alanine 2 the chain carries N-acetylalanine. Phosphoserine occurs at positions 23, 32, 70, 205, and 257. The region spanning 329–539 is the Rab-GAP TBC domain; it reads GLSHSLRKQA…RLWEVMWTEL (211 aa). Serine 623 and serine 655 each carry phosphoserine. The interval 650-671 is disordered; that stretch reads EAKDDSPTQTLASPNACRLTPA. At threonine 669 the chain carries Phosphothreonine.

In terms of assembly, interacts with non-phosphorylated form of RAB8A; phosphorylation of RAB8A at 'Thr-72' disrupts this interaction. Interacts with ARMC12. Ubiquitous, with highest expression in heart, liver and testis and lower expression in brain, spleen, lung, kidney and skeletal muscle.

It is found in the cytoplasm. Functionally, acts as a GTPase activating protein for RAB7A. Does not act on RAB4, RAB5 or RAB6. The chain is TBC1 domain family member 15 (Tbc1d15) from Mus musculus (Mouse).